A 191-amino-acid polypeptide reads, in one-letter code: Adenine phosphoribosyltransferase (191 aa).

It belongs to the purine/pyrimidine phosphoribosyltransferase family. As to quaternary structure, homodimer.

The protein resides in the cytoplasm. It carries out the reaction AMP + diphosphate = 5-phospho-alpha-D-ribose 1-diphosphate + adenine. The protein operates within purine metabolism; AMP biosynthesis via salvage pathway; AMP from adenine: step 1/1. Its function is as follows. Catalyzes a salvage reaction resulting in the formation of AMP, that is energically less costly than de novo synthesis. The polypeptide is Adenine phosphoribosyltransferase (Nocardia farcinica (strain IFM 10152)).